The primary structure comprises 409 residues: L-cysteine:1D-myo-inositol 2-amino-2-deoxy-alpha-D-glucopyranoside ligase (409 aa).

Cys43 contributes to the Zn(2+) binding site. Residues 43–46, Thr58, and 81–83 each bind L-cysteinyl-5'-AMP; these read CGIT and NVT. The 'HIGH' region signature appears at 45–55; the sequence is ITPYDATHMGH. A 'ERGGDP' region motif is present at residues 183–188; the sequence is ERGGDP. Trp224 contacts L-cysteinyl-5'-AMP. Cys228 is a binding site for Zn(2+). Position 246 to 248 (246 to 248) interacts with L-cysteinyl-5'-AMP; it reads GSD. His253 contributes to the Zn(2+) binding site. Position 280 (Val280) interacts with L-cysteinyl-5'-AMP. The 'KMSKS' region motif lies at 286–290; that stretch reads KMSKS.

It belongs to the class-I aminoacyl-tRNA synthetase family. MshC subfamily. Monomer. Requires Zn(2+) as cofactor.

The enzyme catalyses 1D-myo-inositol 2-amino-2-deoxy-alpha-D-glucopyranoside + L-cysteine + ATP = 1D-myo-inositol 2-(L-cysteinylamino)-2-deoxy-alpha-D-glucopyranoside + AMP + diphosphate + H(+). Its function is as follows. Catalyzes the ATP-dependent condensation of GlcN-Ins and L-cysteine to form L-Cys-GlcN-Ins. This Streptomyces griseus subsp. griseus (strain JCM 4626 / CBS 651.72 / NBRC 13350 / KCC S-0626 / ISP 5235) protein is L-cysteine:1D-myo-inositol 2-amino-2-deoxy-alpha-D-glucopyranoside ligase.